A 335-amino-acid chain; its full sequence is Biotin synthase (335 aa).

One can recognise a Radical SAM core domain in the interval 41–269 (KQIQVCKLIS…TSDVRLSAGR (229 aa)). Residues Cys56, Cys60, and Cys63 each coordinate [4Fe-4S] cluster. Cys100, Cys132, Cys192, and Arg264 together coordinate [2Fe-2S] cluster.

This sequence belongs to the radical SAM superfamily. Biotin synthase family. As to quaternary structure, homodimer. It depends on [4Fe-4S] cluster as a cofactor. [2Fe-2S] cluster serves as cofactor.

The enzyme catalyses (4R,5S)-dethiobiotin + (sulfur carrier)-SH + 2 reduced [2Fe-2S]-[ferredoxin] + 2 S-adenosyl-L-methionine = (sulfur carrier)-H + biotin + 2 5'-deoxyadenosine + 2 L-methionine + 2 oxidized [2Fe-2S]-[ferredoxin]. It participates in cofactor biosynthesis; biotin biosynthesis; biotin from 7,8-diaminononanoate: step 2/2. Its function is as follows. Catalyzes the conversion of dethiobiotin (DTB) to biotin by the insertion of a sulfur atom into dethiobiotin via a radical-based mechanism. The sequence is that of Biotin synthase from Nostoc sp. (strain PCC 7120 / SAG 25.82 / UTEX 2576).